The primary structure comprises 195 residues: Dephospho-CoA kinase (195 aa).

Residues Ile3–Asn195 form the DPCK domain. Ala11–Thr16 is a binding site for ATP.

It belongs to the CoaE family.

It is found in the cytoplasm. The enzyme catalyses 3'-dephospho-CoA + ATP = ADP + CoA + H(+). Its pathway is cofactor biosynthesis; coenzyme A biosynthesis; CoA from (R)-pantothenate: step 5/5. Catalyzes the phosphorylation of the 3'-hydroxyl group of dephosphocoenzyme A to form coenzyme A. The chain is Dephospho-CoA kinase from Bartonella henselae (strain ATCC 49882 / DSM 28221 / CCUG 30454 / Houston 1) (Rochalimaea henselae).